The sequence spans 82 residues: Cytochrome b559 subunit alpha (82 aa).

A helical membrane pass occupies residues 22–36 (VIHAITLPSIFLAGF). His-24 provides a ligand contact to heme.

Belongs to the PsbE/PsbF family. As to quaternary structure, heterodimer of an alpha subunit and a beta subunit. PSII is composed of 1 copy each of membrane proteins PsbA, PsbB, PsbC, PsbD, PsbE, PsbF, PsbH, PsbI, PsbJ, PsbK, PsbL, PsbM, PsbT, PsbX, PsbY, PsbZ, Psb30/Ycf12, peripheral proteins PsbO, CyanoQ (PsbQ), PsbU, PsbV and a large number of cofactors. It forms dimeric complexes. It depends on heme b as a cofactor.

The protein localises to the cellular thylakoid membrane. Functionally, this b-type cytochrome is tightly associated with the reaction center of photosystem II (PSII). PSII is a light-driven water:plastoquinone oxidoreductase that uses light energy to abstract electrons from H(2)O, generating O(2) and a proton gradient subsequently used for ATP formation. It consists of a core antenna complex that captures photons, and an electron transfer chain that converts photonic excitation into a charge separation. This Synechococcus sp. (strain WH7803) protein is Cytochrome b559 subunit alpha.